The sequence spans 2198 residues: Activating signal cointegrator 1 complex subunit 3 (2198 aa).

S12 is modified (phosphoserine). Coiled-coil stretches lie at residues 18–81 (KQDN…KQIV) and 328–356 (IQSE…KAGE). Residues 487–670 (ETAYNTNENM…FLHVNPYIGL (184 aa)) enclose the Helicase ATP-binding 1 domain. 500 to 507 (APTGAGKT) contributes to the ATP binding site. K573 is subject to N6-acetyllysine. Residues 612-615 (DEVH) carry the DEVH box motif. The 219-residue stretch at 697–915 (QLNNMDEVCY…GTVTNVEEAV (219 aa)) folds into the Helicase C-terminal 1 domain. An SEC63 1 domain is found at 979 to 1288 (STDLGRTASH…GAEAVCIINF (310 aa)). The Helicase ATP-binding 2 domain occupies 1337–1512 (HTLYHTDCNV…WLNIKQMGLF (176 aa)). Position 1350–1357 (1350–1357 (APTGSGKT)) interacts with ATP. The DEIH box motif lies at 1454–1457 (DEIH). Residues 1545–1740 (PAFQAIRSHS…VLSDHLNAEI (196 aa)) form the Helicase C-terminal 2 domain. One can recognise an SEC63 2 domain in the interval 1813–2177 (PLTCGRIASY…LGLDQQYDIY (365 aa)).

The protein belongs to the helicase family. Identified in the ASCC complex that contains ASCC1, ASCC2 and ASCC3. Functions as a scaffolding subunit that interacts directly with both ASCC1 and ASCC2. Interacts directly with ALKBH3, and thereby recruits ALKBH3 to the ASCC complex. Part of the ASC-1/TRIP4 complex, that contains TRIP4, ASCC1, ASCC2 and ASCC3. Part of the RQT (ribosome quality control trigger) complex, that contains ASCC2, ASCC3 and TRIP4. Associates with ribosomes; recruited to collided ribosomes. Interacts with ZCCHC4. Interacts with ZNF598. Interacts with RPS3.

The protein localises to the nucleus. It is found in the nucleus speckle. It localises to the cytoplasm. The protein resides in the cytosol. The catalysed reaction is Couples ATP hydrolysis with the unwinding of duplex DNA by translocating in the 3'-5' direction.. It catalyses the reaction ATP + H2O = ADP + phosphate + H(+). Its function is as follows. ATPase involved both in DNA repair and rescue of stalled ribosomes. 3'-5' DNA helicase involved in repair of alkylated DNA: promotes DNA unwinding to generate single-stranded substrate needed for ALKBH3, enabling ALKBH3 to process alkylated N3-methylcytosine (3mC) within double-stranded regions. Also involved in activation of the ribosome quality control (RQC) pathway, a pathway that degrades nascent peptide chains during problematic translation. Drives the splitting of stalled ribosomes that are ubiquitinated in a ZNF598-dependent manner, as part of the ribosome quality control trigger (RQT) complex. Part of the ASC-1 complex that enhances NF-kappa-B, SRF and AP1 transactivation. This is Activating signal cointegrator 1 complex subunit 3 (Ascc3) from Mus musculus (Mouse).